A 136-amino-acid chain; its full sequence is Small ribosomal subunit protein uS9 (136 aa).

The tract at residues Leu-96 to Arg-136 is disordered. Basic and acidic residues predominate over residues Pro-98–Ala-116. Residues Lys-117 to Arg-136 are compositionally biased toward basic residues.

This sequence belongs to the universal ribosomal protein uS9 family.

The protein is Small ribosomal subunit protein uS9 of Prochlorococcus marinus (strain MIT 9515).